The following is an 857-amino-acid chain: MSSLSDHTPMMQQYWKLKNQHPDQLMFYRMGDFYEIFYEDAKKAAKLLDITLTARGQSAGQSIPMCGIPFHSLEGYLAKLVKLGESVVICEQIGDPATSKGPVERQVVRIITPGTVSDEALLDERRDNLIAALLGDERLFGLAVLDITSGNFSVQEIKGWENLLAELERLNPVELLIPDDWPRDLPAEKRPGARRRAPWDFDRDSARKALCQQFATKDLKGFGCDKLTLAIGAAGCLLTYAKETQRTALPHLRSLRHERLDDTVILDGASRRNLELDINLAGGRDNTLQSVIDRCQTAMASRLLSRWLNRPLRDLKVLQARQDSIRCLLDSYRFEKLQPQLKEIGDIERILARIGLRNARPRDLARLRDALGALPELQNAMTELEAPHLARLAAITGTYPELASLLERAIIDNPPAVIRDGGVLKAGYDNELDELLAISENAGQFLIDLEAREKARTGLANLKVGYNRVHGYFIELPTKQAEQAPGDYIRRQTLKGAERFITPELKAFEDKALSAKSRALAREKMLYDALLETLISHLAPLQDSAAALAELDVLSNLAERALNLDLSCPRFVDEPCLRIEQGRHPVVEQVLTTPFVANDLGLDNSTRMLIITGPNMGGKSTYMRQTALIVLLAHIGSFVPAASCELSLVDRIFTRIGSSDDLAGGRSTFMVEMSETANILHNATDRSLVLMDEVGRGTSTFDGLSLAWAAAERLAQLRAYTLFATHYFELTVLPESEPLVANVHLNATEHNERIVFLHHVLPGPASQSYGLAVAQLAGVPTAVIQRAREHLGRLETTSLPHEQPAAHKAKDAPQVPHQSDLFASLPHPAIEKLGKLQLDDMTPRQAIEMLYQLKNLL.

613 to 620 is a binding site for ATP; that stretch reads GPNMGGKS. The tract at residues 797–820 is disordered; sequence TSLPHEQPAAHKAKDAPQVPHQSD.

It belongs to the DNA mismatch repair MutS family.

This protein is involved in the repair of mismatches in DNA. It is possible that it carries out the mismatch recognition step. This protein has a weak ATPase activity. This is DNA mismatch repair protein MutS from Pseudomonas putida (strain ATCC 700007 / DSM 6899 / JCM 31910 / BCRC 17059 / LMG 24140 / F1).